The primary structure comprises 294 residues: Large ribosomal subunit protein uL18 (294 aa).

A disordered region spans residues 247-275 (RADPSPSAKKAAKPSKRHTAKRLTYDERK). The span at 256 to 267 (KAAKPSKRHTAK) shows a compositional bias: basic residues.

The protein belongs to the universal ribosomal protein uL18 family. As to quaternary structure, component of the large ribosomal subunit (LSU).

The protein resides in the cytoplasm. It localises to the nucleus. Functionally, component of the ribosome, a large ribonucleoprotein complex responsible for the synthesis of proteins in the cell. The small ribosomal subunit (SSU) binds messenger RNAs (mRNAs) and translates the encoded message by selecting cognate aminoacyl-transfer RNA (tRNA) molecules. The large subunit (LSU) contains the ribosomal catalytic site termed the peptidyl transferase center (PTC), which catalyzes the formation of peptide bonds, thereby polymerizing the amino acids delivered by tRNAs into a polypeptide chain. The nascent polypeptides leave the ribosome through a tunnel in the LSU and interact with protein factors that function in enzymatic processing, targeting, and the membrane insertion of nascent chains at the exit of the ribosomal tunnel. The polypeptide is Large ribosomal subunit protein uL18 (rpl-5) (Caenorhabditis briggsae).